The primary structure comprises 425 residues: MNAMMETSELPAVFDGVKLAAVAAVLYVIVRCLNLKSPTAPPDLYFQDSGLSRFLLKSCPLLTKEYIPPLIWGKSGHIQTALYGKMGRVRSPHPYGHRKFITMSDGATSTFDLFEPLAEHCVGDDITMVICPGIANHSEKQYIRTFVDYAQKNGYRCAVLNHLGALPNIELTSPRMFTYGCTWEFGAMVNYIKKTYPLTQLVVVGFSLGGNIVCKYLGETQANQEKVLCCVSVCQGYSALRAQETFMQWDQCRRFYNFLMADNMKKIILSHRQALFGDHVKKPQSLEDTDLSRLYTATSLMQIDDNVMRKFHGYNSLKEYYEEESCMRYLHRIYVPLMLVNAADDPLVHESLLAIPKSLSEKRENVMFVLPLHGGHLGFFEGSVLFPEPLTWMDKLVVEYANAICQWERNKSQCSDTELVEADLE.

The Cytoplasmic portion of the chain corresponds to 1-9; it reads MNAMMETSE. A helical; Signal-anchor for type II membrane protein transmembrane segment spans residues 10–30; sequence LPAVFDGVKLAAVAAVLYVIV. The Extracellular segment spans residues 31–425; sequence RCLNLKSPTA…DTELVEADLE (395 aa). The AB hydrolase-1 domain occupies 128 to 382; it reads MVICPGIANH…HGGHLGFFEG (255 aa). The N-linked (GlcNAc...) asparagine glycan is linked to Asn-136. Ser-207 (nucleophile) is an active-site residue. Active-site charge relay system residues include Asp-345 and His-376. A glycan (N-linked (GlcNAc...) asparagine) is linked at Asn-410.

The protein belongs to the AB hydrolase superfamily. AB hydrolase 4 family.

Its subcellular location is the cell membrane. The enzyme catalyses Hydrolyzes glycerol monoesters of long-chain fatty acids.. The catalysed reaction is an acetyl ester + H2O = an aliphatic alcohol + acetate + H(+). It catalyses the reaction a triacylglycerol + H2O = a diacylglycerol + a fatty acid + H(+). It carries out the reaction 2-(5Z,8Z,11Z,14Z-eicosatetraenoyl)-glycerol + H2O = glycerol + (5Z,8Z,11Z,14Z)-eicosatetraenoate + H(+). The enzyme catalyses a butanoate ester + H2O = an aliphatic alcohol + butanoate + H(+). The catalysed reaction is hexadecanoate ester + H2O = an aliphatic alcohol + hexadecanoate + H(+). With respect to regulation, acylglycerol lipase activity is activated upon binding to progesterone. Progesterone-dependent acylglycerol lipase that catalyzes hydrolysis of endocannabinoid arachidonoylglycerol (AG) from cell membrane. Acts as a progesterone receptor: progesterone-binding activates the acylglycerol lipase activity, mediating degradation of 1-arachidonoylglycerol (1AG) and 2-arachidonoylglycerol (2AG) to glycerol and arachidonic acid (AA). Also displays an ester hydrolase activity against acetyl ester, butanoate ester and hexadecanoate ester. Plays a key role in sperm capacitation in response to progesterone by mediating degradation of 2AG, an inhibitor of the sperm calcium channel CatSper, leading to calcium influx via CatSper and sperm activation. May also play a role in smooth muscle cells migration. The protein is Monoacylglycerol lipase ABHD2 (ABHD2) of Bos taurus (Bovine).